We begin with the raw amino-acid sequence, 312 residues long: Homoserine kinase (312 aa).

94–104 (PLGRGLGSSAA) contacts ATP.

This sequence belongs to the GHMP kinase family. Homoserine kinase subfamily.

Its subcellular location is the cytoplasm. It catalyses the reaction L-homoserine + ATP = O-phospho-L-homoserine + ADP + H(+). It functions in the pathway amino-acid biosynthesis; L-threonine biosynthesis; L-threonine from L-aspartate: step 4/5. Functionally, catalyzes the ATP-dependent phosphorylation of L-homoserine to L-homoserine phosphate. This chain is Homoserine kinase, found in Caldanaerobacter subterraneus subsp. tengcongensis (strain DSM 15242 / JCM 11007 / NBRC 100824 / MB4) (Thermoanaerobacter tengcongensis).